A 692-amino-acid polypeptide reads, in one-letter code: Elongation factor G (692 aa).

One can recognise a tr-type G domain in the interval 8-282 (EKTRNIGIMA…AVIDYLPSPL (275 aa)). GTP contacts are provided by residues 17-24 (AHVDAGKT), 81-85 (DTPGH), and 135-138 (NKMD).

It belongs to the TRAFAC class translation factor GTPase superfamily. Classic translation factor GTPase family. EF-G/EF-2 subfamily.

The protein resides in the cytoplasm. In terms of biological role, catalyzes the GTP-dependent ribosomal translocation step during translation elongation. During this step, the ribosome changes from the pre-translocational (PRE) to the post-translocational (POST) state as the newly formed A-site-bound peptidyl-tRNA and P-site-bound deacylated tRNA move to the P and E sites, respectively. Catalyzes the coordinated movement of the two tRNA molecules, the mRNA and conformational changes in the ribosome. This chain is Elongation factor G, found in Streptococcus agalactiae serotype Ia (strain ATCC 27591 / A909 / CDC SS700).